A 295-amino-acid polypeptide reads, in one-letter code: tRNA-cytidine(32) 2-sulfurtransferase (295 aa).

The short motif at 63 to 68 (SGGKDS) is the PP-loop motif element. [4Fe-4S] cluster is bound by residues Cys138, Cys141, and Cys229.

This sequence belongs to the TtcA family. In terms of assembly, homodimer. The cofactor is Mg(2+). [4Fe-4S] cluster serves as cofactor.

It is found in the cytoplasm. It carries out the reaction cytidine(32) in tRNA + S-sulfanyl-L-cysteinyl-[cysteine desulfurase] + AH2 + ATP = 2-thiocytidine(32) in tRNA + L-cysteinyl-[cysteine desulfurase] + A + AMP + diphosphate + H(+). It participates in tRNA modification. Its function is as follows. Catalyzes the ATP-dependent 2-thiolation of cytidine in position 32 of tRNA, to form 2-thiocytidine (s(2)C32). The sulfur atoms are provided by the cysteine/cysteine desulfurase (IscS) system. This chain is tRNA-cytidine(32) 2-sulfurtransferase, found in Mesorhizobium japonicum (strain LMG 29417 / CECT 9101 / MAFF 303099) (Mesorhizobium loti (strain MAFF 303099)).